A 143-amino-acid polypeptide reads, in one-letter code: Large-conductance mechanosensitive channel (143 aa).

Helical transmembrane passes span 10–30 (FAVK…GAFS) and 89–109 (GSFI…FLMV).

Belongs to the MscL family. Homopentamer.

Its subcellular location is the cell inner membrane. In terms of biological role, channel that opens in response to stretch forces in the membrane lipid bilayer. May participate in the regulation of osmotic pressure changes within the cell. The polypeptide is Large-conductance mechanosensitive channel (Burkholderia multivorans (strain ATCC 17616 / 249)).